The primary structure comprises 39 residues: Fuctinin-3 (39 aa).

The segment at 1–39 (KELNSNHDGADETSEKEQQEAIEHIDEVQNEIDRLNETA) is disordered.

The protein to human SET/PHAPII protein. In terms of assembly, oligomer.

It is found in the cytoplasm. Functionally, has a role in the physiological regulation of fucosylation processes. The sequence is that of Fuctinin-3 from Rattus norvegicus (Rat).